Here is a 352-residue protein sequence, read N- to C-terminus: Selenide, water dikinase (352 aa).

Cys23 is a catalytic residue. ATP contacts are provided by residues Lys26 and 54-56 (SRD). Position 57 (Asp57) interacts with Mg(2+). ATP is bound by residues Asp74, Asp97, and 145 to 147 (GHS). Asp97 serves as a coordination point for Mg(2+). Asp233 is a binding site for Mg(2+).

It belongs to the selenophosphate synthase 1 family. Class I subfamily. In terms of assembly, homodimer. Requires Mg(2+) as cofactor.

It carries out the reaction hydrogenselenide + ATP + H2O = selenophosphate + AMP + phosphate + 2 H(+). Its function is as follows. Synthesizes selenophosphate from selenide and ATP. This is Selenide, water dikinase from Shewanella sp. (strain MR-4).